A 229-amino-acid polypeptide reads, in one-letter code: Putative germin-like protein subfamily 1 member 2 (229 aa).

An N-terminal signal peptide occupies residues 1-24; sequence MKGLVQFLVAKIILLVLASTFVHC. A disulfide bond links cysteine 34 and cysteine 50. Asparagine 38 and asparagine 71 each carry an N-linked (GlcNAc...) asparagine glycan. Residues 64 to 215 enclose the Cupin type-1 domain; the sequence is SGLNIPGNTS…AFALDVNIVR (152 aa). Mn(2+) is bound by residues histidine 112 and histidine 114. An N-linked (GlcNAc...) asparagine glycan is attached at asparagine 139. Residue histidine 163 coordinates Mn(2+).

This sequence belongs to the germin family. As to quaternary structure, oligomer (believed to be a pentamer but probably hexamer).

It localises to the secreted. The protein localises to the extracellular space. It is found in the apoplast. In terms of biological role, may play a role in plant defense. Probably has no oxalate oxidase activity even if the active site is conserved. The protein is Putative germin-like protein subfamily 1 member 2 of Arabidopsis thaliana (Mouse-ear cress).